Consider the following 425-residue polypeptide: Lysosome-associated membrane glycoprotein 2 (425 aa).

A signal peptide spans 1 to 27 (MAPPRCPAGLALLLLLLGACGFFQSYA). Residues 28–192 (VEVDVKDASN…SKKESRCYAD (165 aa)) are first lumenal domain. Over 28 to 389 (VEVDVKDASN…EECFADSDLN (362 aa)) the chain is Lumenal. Asn-37, Asn-56, Asn-62, Asn-74, Asn-100, Asn-105, Asn-120, Asn-163, Asn-170, Asn-179, Asn-206, Asn-232, Asn-239, Asn-252, Asn-276, Asn-287, Asn-298, Asn-312, Asn-320, and Asn-331 each carry an N-linked (GlcNAc...) asparagine glycan. A disulfide bridge connects residues Cys-40 and Cys-78. Cys-153 and Cys-189 are joined by a disulfide. A hinge region spans residues 193 to 238 (TPTAAPTVLPTVANVTTASTTISPAPTTAPKPAENPVTGNYSLKTG). The segment at 239–390 (NKTCLLATVG…ECFADSDLNF (152 aa)) is second lumenal domain. The cysteines at positions 242 and 274 are disulfide-linked. Cys-345 and Cys-382 are disulfide-bonded. A helical transmembrane segment spans residues 390 to 414 (FLIPVAVGMALGFLIILVFISYIIG). The Cytoplasmic portion of the chain corresponds to 415–425 (RRKSRTGYQSV). An important for binding and subsequent lysosomal degradation of target proteins region spans residues 416–419 (RKSR).

This sequence belongs to the LAMP family. Monomer. Forms large homooligomers. In terms of processing, extensively N-glycosylated. Contains a minor proportion of O-linked glycans.

It localises to the lysosome membrane. The protein resides in the endosome membrane. Its subcellular location is the cell membrane. The protein localises to the cytoplasmic vesicle. It is found in the autophagosome membrane. Its function is as follows. Lysosomal membrane glycoprotein which plays an important role in lysosome biogenesis, lysosomal pH regulation and autophagy. Plays an important role in chaperone-mediated autophagy, a process that mediates lysosomal degradation of proteins in response to various stresses and as part of the normal turnover of proteins with a long biological half-live. In the chaperone-mediated autophagy, acts downstream of chaperones, such as HSPA8/HSC70, which recognize and bind substrate proteins and mediate their recruitment to lysosomes, where target proteins bind LAMP2. Plays a role in lysosomal protein degradation in response to starvation. Required for the fusion of autophagosomes with lysosomes during autophagy. In Gallus gallus (Chicken), this protein is Lysosome-associated membrane glycoprotein 2 (LAMP2).